Consider the following 124-residue polypeptide: MIKDRLLQLVHLLISLALIMGALGIGNTIQNLTGVSVPGSVIGMLVLFFSMTLGLVKVEWVKPGATLFIRYMILLFVPISVGLMQHFDMLLANALPIIASAVGGSLIVLISLAWFLDYLLKEKH.

A run of 4 helical transmembrane segments spans residues 6-26 (LLQL…LGIG), 35-55 (VSVP…TLGL), 72-92 (MILL…MLLA), and 95-115 (LPII…LAWF).

Belongs to the UPF0299 family.

The protein resides in the cell inner membrane. In Vibrio campbellii (strain ATCC BAA-1116), this protein is UPF0299 membrane protein VIBHAR_02118.